We begin with the raw amino-acid sequence, 72 residues long: Metallothionein-like protein type 2 (72 aa).

It belongs to the metallothionein superfamily. Type 15 family.

Metallothioneins have a high content of cysteine residues that bind various heavy metals. This chain is Metallothionein-like protein type 2, found in Solanum lycopersicum (Tomato).